The sequence spans 501 residues: 2,3-bisphosphoglycerate-independent phosphoglycerate mutase (501 aa).

Residues Asp-12 and Ser-62 each contribute to the Mn(2+) site. The active-site Phosphoserine intermediate is Ser-62. Residues His-121, 150 to 151 (RD), Arg-182, Arg-188, 253 to 256 (RSDR), and Lys-323 contribute to the substrate site. Residues Asp-390, His-394, Asp-431, His-432, and His-450 each contribute to the Mn(2+) site.

Belongs to the BPG-independent phosphoglycerate mutase family. In terms of assembly, monomer. Requires Mn(2+) as cofactor.

It catalyses the reaction (2R)-2-phosphoglycerate = (2R)-3-phosphoglycerate. Its pathway is carbohydrate degradation; glycolysis; pyruvate from D-glyceraldehyde 3-phosphate: step 3/5. In terms of biological role, catalyzes the interconversion of 2-phosphoglycerate and 3-phosphoglycerate. The chain is 2,3-bisphosphoglycerate-independent phosphoglycerate mutase from Ehrlichia canis (strain Jake).